The chain runs to 1056 residues: PAX-interacting protein 1 (1056 aa).

BRCT domains lie at 8-93 (VPEE…GFSP) and 94-183 (ESCQ…FYHP). The interval 94 to 183 (ESCQIFFGLT…RRKDEAFYHP (90 aa)) is interaction with PAGR1. The span at 188-205 (YEEEEEEEEEGDNEEQDS) shows a compositional bias: acidic residues. 3 disordered regions span residues 188–276 (YEEE…QRRL), 393–412 (THVL…HPAL), and 419–486 (MQLQ…FQQQ). The segment covering 214-223 (SSVASSAVAS) has biased composition (low complexity). S223 and S230 each carry phosphoserine. Low complexity-rich tracts occupy residues 396 to 412 (LQQH…HPAL), 419 to 435 (MQLQ…QQQP), and 445 to 486 (QFPQ…FQQQ). The interval 577-1056 (QLFGHDPAVE…TLDYESYKFN (480 aa)) is interaction with TP53BP1. BRCT domains follow at residues 588–681 (PEES…RALH), 688–776 (PGGK…VQYS), 853–934 (TPLV…NYIL), and 955–989 (HVSP…GGKV). Residues 655–672 (RKRCVTAHWLNTVLKKKK) carry the Nuclear localization signal motif.

Interacts with the C-terminal transactivation domain of PAX2. Forms a constitutive complex with PAGR1 independently of the MLL2/MLL3 complex. Interacts with TP53BP1 (when phosphorylated at the N-terminus by ATM). Interacts with HLTF. Component of the KMT2 family MLL2/MLL3 complex (also named ASCOM complex), at least composed of the HMTs KMT2D and/or KMT2C, the common subunits ASH2L, RBBP5, WDR5 and DPY30, and the complex type-specific subunits PAXIP1/PTIP, PAGR1, NCOA6 and KDM6A; required for the association of PAGR1 with the MLL2/MLL3 complex. Interacts with NUPR1; this interaction prevents PAXIP1 inhibition of PAX2 transcription factor activity. As to expression, expression detected in all tissues examined, including brain stem, cerebellum, cortex, heart, spleen, kidney, liver, thymus and lung.

The protein resides in the nucleus matrix. The protein localises to the chromosome. Its function is as follows. Involved in DNA damage response and in transcriptional regulation through histone methyltransferase (HMT) complexes such as the MLL2/MLL3 complex. Plays a role in early development. In DNA damage response is required for cell survival after ionizing radiation. In vitro shown to be involved in the homologous recombination mechanism for the repair of double-strand breaks (DSBs). Its localization to DNA damage foci requires Rnf8 and Ube2n. Recruits Tp53bp1 to DNA damage foci and, at least in particular repair processes, effective DNA damage response appears to require the association with Tp53bp1 phosphorylated by Atm. Together with Tp53bp1 regulates Atm association. Proposed to recruit Pagr1 to sites of DNA damage and the Pagr1:Paxip1 complex is required for cell survival in response to DNA damage independently of the MLL2/MLL3 complex. However, this function has been questioned. Promotes ubiquitination of PCNA following UV irradiation and may regulate recruitment of polymerase eta and Rad51 to chromatin after DNA damage. Proposed to be involved in transcriptional regulation by linking MLL-containing histone methyltransferase (HMT) complexes to gene promoters by interacting with promoter-bound transcription factors such as Pax2. Associates with gene promoters that are known to be regulated by Kmt2d/Mll2. During immunoglobulin class switching in activated B-cells is involved in trimethylation of histone H3 at 'Lys-4' and in transcription initiation of downstream switch regions at the immunoglobulin heavy-chain (Igh) locus; this function appears to involve the recruitment of MLL-containing HMT complexes. Conflictingly, its function in transcriptional regulation during immunoglobulin class switching is reported to be independent of the MLL2/MLL3 complex. This chain is PAX-interacting protein 1 (Paxip1), found in Mus musculus (Mouse).